A 406-amino-acid chain; its full sequence is Succinylornithine transaminase (406 aa).

Lysine 252 is subject to N6-(pyridoxal phosphate)lysine.

Belongs to the class-III pyridoxal-phosphate-dependent aminotransferase family. AstC subfamily. Pyridoxal 5'-phosphate serves as cofactor.

It carries out the reaction N(2)-succinyl-L-ornithine + 2-oxoglutarate = N-succinyl-L-glutamate 5-semialdehyde + L-glutamate. It participates in amino-acid degradation; L-arginine degradation via AST pathway; L-glutamate and succinate from L-arginine: step 3/5. Its function is as follows. Catalyzes the transamination of N(2)-succinylornithine and alpha-ketoglutarate into N(2)-succinylglutamate semialdehyde and glutamate. Can also act as an acetylornithine aminotransferase. This is Succinylornithine transaminase from Escherichia coli O45:K1 (strain S88 / ExPEC).